A 211-amino-acid polypeptide reads, in one-letter code: Thiamine-phosphate synthase (211 aa).

Residues 37–41 and N69 contribute to the 4-amino-2-methyl-5-(diphosphooxymethyl)pyrimidine site; that span reads QLRIK. Mg(2+) contacts are provided by D70 and D89. Residue S108 participates in 4-amino-2-methyl-5-(diphosphooxymethyl)pyrimidine binding. 134-136 is a binding site for 2-[(2R,5Z)-2-carboxy-4-methylthiazol-5(2H)-ylidene]ethyl phosphate; the sequence is TQT. 4-amino-2-methyl-5-(diphosphooxymethyl)pyrimidine is bound at residue K137. Residues G166 and 186–187 contribute to the 2-[(2R,5Z)-2-carboxy-4-methylthiazol-5(2H)-ylidene]ethyl phosphate site; that span reads VS.

It belongs to the thiamine-phosphate synthase family. The cofactor is Mg(2+).

The catalysed reaction is 2-[(2R,5Z)-2-carboxy-4-methylthiazol-5(2H)-ylidene]ethyl phosphate + 4-amino-2-methyl-5-(diphosphooxymethyl)pyrimidine + 2 H(+) = thiamine phosphate + CO2 + diphosphate. It catalyses the reaction 2-(2-carboxy-4-methylthiazol-5-yl)ethyl phosphate + 4-amino-2-methyl-5-(diphosphooxymethyl)pyrimidine + 2 H(+) = thiamine phosphate + CO2 + diphosphate. It carries out the reaction 4-methyl-5-(2-phosphooxyethyl)-thiazole + 4-amino-2-methyl-5-(diphosphooxymethyl)pyrimidine + H(+) = thiamine phosphate + diphosphate. Its pathway is cofactor biosynthesis; thiamine diphosphate biosynthesis; thiamine phosphate from 4-amino-2-methyl-5-diphosphomethylpyrimidine and 4-methyl-5-(2-phosphoethyl)-thiazole: step 1/1. Its function is as follows. Condenses 4-methyl-5-(beta-hydroxyethyl)thiazole monophosphate (THZ-P) and 2-methyl-4-amino-5-hydroxymethyl pyrimidine pyrophosphate (HMP-PP) to form thiamine monophosphate (TMP). The chain is Thiamine-phosphate synthase from Shigella dysenteriae serotype 1 (strain Sd197).